A 403-amino-acid polypeptide reads, in one-letter code: 3-oxoacyl-[acyl-carrier-protein] synthase 2 (403 aa).

Positions 1–403 (VITGMGALSP…GGHNAVLVFK (403 aa)) constitute a Ketosynthase family 3 (KS3) domain. Catalysis depends on for beta-ketoacyl synthase activity residues Cys158, His297, and His334.

Belongs to the thiolase-like superfamily. Beta-ketoacyl-ACP synthases family.

The catalysed reaction is a fatty acyl-[ACP] + malonyl-[ACP] + H(+) = a 3-oxoacyl-[ACP] + holo-[ACP] + CO2. It catalyses the reaction (9Z)-hexadecenoyl-[ACP] + malonyl-[ACP] + H(+) = 3-oxo-(11Z)-octadecenoyl-[ACP] + holo-[ACP] + CO2. It participates in lipid metabolism; fatty acid biosynthesis. Functionally, involved in the type II fatty acid elongation cycle. Catalyzes the elongation of a wide range of acyl-ACP by the addition of two carbons from malonyl-ACP to an acyl acceptor. Can efficiently catalyze the conversion of palmitoleoyl-ACP (cis-hexadec-9-enoyl-ACP) to cis-vaccenoyl-ACP (cis-octadec-11-enoyl-ACP), an essential step in the thermal regulation of fatty acid composition. This is 3-oxoacyl-[acyl-carrier-protein] synthase 2 (fabF) from Staphylococcus aureus.